A 310-amino-acid polypeptide reads, in one-letter code: L-lactate dehydrogenase (310 aa).

NAD(+) is bound by residues valine 11, aspartate 32, tyrosine 62, and 76–77 (GV). Substrate contacts are provided by residues glutamine 79, arginine 85, and 117 to 120 (NPVD). Residues 115-117 (ATN) and serine 140 contribute to the NAD(+) site. 145 to 148 (DTAR) provides a ligand contact to substrate. Beta-D-fructose 1,6-bisphosphate is bound by residues arginine 150 and histidine 165. The active-site Proton acceptor is histidine 172. Tyrosine 218 carries the post-translational modification Phosphotyrosine. Residue threonine 227 participates in substrate binding.

Belongs to the LDH/MDH superfamily. LDH family. Homotetramer.

Its subcellular location is the cytoplasm. The enzyme catalyses (S)-lactate + NAD(+) = pyruvate + NADH + H(+). The protein operates within fermentation; pyruvate fermentation to lactate; (S)-lactate from pyruvate: step 1/1. With respect to regulation, activated by citrate at pH 5. Allosterically activated by fructose 1,6-bisphosphate (FBP) at pH from 5.8 to 7.2. Functionally, catalyzes the conversion of lactate to pyruvate. The protein is L-lactate dehydrogenase of Thermus aquaticus.